The sequence spans 342 residues: Spore photoproduct lyase (342 aa).

Positions 77–305 (SKPSAEYAIP…EEKRRYKWGR (229 aa)) constitute a Radical SAM core domain. [4Fe-4S] cluster is bound by residues cysteine 91, cysteine 95, and cysteine 98. Residues 218–235 (EAAVKVAKAGYPLGFIVA) constitute a DNA-binding region (H-T-H motif).

It belongs to the radical SAM superfamily. SPL family. Monomer or homodimer. The cofactor is [4Fe-4S] cluster. S-adenosyl-L-methionine is required as a cofactor.

The enzyme catalyses (5R)-5,6-dihydro-5-(thymidin-7-yl)thymidine in DNA = a thymidine dimer in DNA. Functionally, involved in repair of UV radiation-induced DNA damage during spore germination. Can repair thymine dimer 5-thyminyl-5,6-dihydrothymine (known as spore photoproduct (SP)) by in situ monomerization of SP to two thymines. The sequence is that of Spore photoproduct lyase (splB) from Bacillus subtilis (strain 168).